Reading from the N-terminus, the 203-residue chain is Leucyl/phenylalanyl-tRNA--protein transferase (203 aa).

It belongs to the L/F-transferase family.

The protein resides in the cytoplasm. The enzyme catalyses N-terminal L-lysyl-[protein] + L-leucyl-tRNA(Leu) = N-terminal L-leucyl-L-lysyl-[protein] + tRNA(Leu) + H(+). It catalyses the reaction N-terminal L-arginyl-[protein] + L-leucyl-tRNA(Leu) = N-terminal L-leucyl-L-arginyl-[protein] + tRNA(Leu) + H(+). It carries out the reaction L-phenylalanyl-tRNA(Phe) + an N-terminal L-alpha-aminoacyl-[protein] = an N-terminal L-phenylalanyl-L-alpha-aminoacyl-[protein] + tRNA(Phe). Its function is as follows. Functions in the N-end rule pathway of protein degradation where it conjugates Leu, Phe and, less efficiently, Met from aminoacyl-tRNAs to the N-termini of proteins containing an N-terminal arginine or lysine. This chain is Leucyl/phenylalanyl-tRNA--protein transferase, found in Chelativorans sp. (strain BNC1).